The primary structure comprises 284 residues: Pantothenate synthetase (284 aa).

Position 30–37 (30–37 (MGNLHDGH)) interacts with ATP. His37 acts as the Proton donor in catalysis. Gln61 lines the (R)-pantoate pocket. Gln61 serves as a coordination point for beta-alanine. 149–152 (GEKD) contacts ATP. Position 155 (Gln155) interacts with (R)-pantoate. ATP contacts are provided by residues Ile178 and 186–189 (LSSR).

It belongs to the pantothenate synthetase family. In terms of assembly, homodimer.

It localises to the cytoplasm. The catalysed reaction is (R)-pantoate + beta-alanine + ATP = (R)-pantothenate + AMP + diphosphate + H(+). It functions in the pathway cofactor biosynthesis; (R)-pantothenate biosynthesis; (R)-pantothenate from (R)-pantoate and beta-alanine: step 1/1. Catalyzes the condensation of pantoate with beta-alanine in an ATP-dependent reaction via a pantoyl-adenylate intermediate. The protein is Pantothenate synthetase of Salmonella paratyphi A (strain ATCC 9150 / SARB42).